Here is a 437-residue protein sequence, read N- to C-terminus: uncharacterized protein (437 aa).

Basic residues-rich tracts occupy residues 1-29 (MDTPLRGRRAAGRGVRARARPRTRRRHRN), 81-91 (LRGRHPRVRRV), and 101-118 (RRRHLLRRRVGGHRGRNR). Disordered stretches follow at residues 1 to 31 (MDTPLRGRRAAGRGVRARARPRTRRRHRNDH) and 77 to 437 (EHVP…QGTR). The segment covering 119-132 (HAGDRRAPGVDSRL) has biased composition (basic and acidic residues). Residues 133–142 (RQQHQHPRGR) show a composition bias toward basic residues. The segment covering 143–164 (HASDRVQDGAHPRRQRLREQPR) has biased composition (basic and acidic residues). Positions 165–190 (HAGRPRRRQPPRRGRSRGTHRRHLRQ) are enriched in basic residues. Basic and acidic residues-rich tracts occupy residues 198 to 209 (GPDEDQAREFRG) and 217 to 253 (HPPTARDVLRGEPGHGDGHHLEGRRGRPRPQGREAGR). Composition is skewed to basic residues over residues 284-293 (TVHRGGRLRG) and 324-348 (PHSRKRRDTGAHHRHWRRRRRRVRH). Positions 371 to 382 (DAAAYASVPAHA) are enriched in low complexity.

This is an uncharacterized protein from Haloferax lucentense (strain DSM 14919 / JCM 9276 / NCIMB 13854 / Aa 2.2) (Haloferax alicantei).